A 735-amino-acid polypeptide reads, in one-letter code: Alpha-adducin (735 aa).

M1 carries the post-translational modification N-acetylmethionine. Residues 1-11 are compositionally biased toward low complexity; sequence MNGDTRAAVVT. Positions 1-21 are disordered; it reads MNGDTRAAVVTSPPPTTAPHK. Phosphoserine is present on S12. S59 is subject to Phosphoserine; by PKA. The residue at position 64 (S64) is a Phosphoserine. Position 331 is a phosphothreonine (T331). Phosphoserine occurs at positions 334, 353, and 355. Phosphothreonine is present on T358. 2 positions are modified to phosphoserine: S364 and S366. S408 carries the post-translational modification Phosphoserine; by PKA. 2 disordered regions span residues 418–486 and 576–735; these read GHSF…SAVP and RREV…KSDS. S427 carries the post-translational modification Phosphoserine. T429 carries the post-translational modification Phosphothreonine. A Phosphoserine modification is found at S431. S436 carries the post-translational modification Phosphoserine; by PKA. A Phosphothreonine; by ROCK2 modification is found at T445. Phosphoserine is present on residues S464 and S465. Residue T480 is modified to Phosphothreonine; by ROCK2. Position 481 is a phosphoserine; by PKA (S481). Basic and acidic residues predominate over residues 576–601; that stretch reads RREVERKQKGSEENLDETREQKEKSP. Phosphoserine occurs at positions 586, 600, and 605. T610 carries the phosphothreonine modification. S613 bears the Phosphoserine mark. T614 carries the post-translational modification Phosphothreonine. A compositionally biased stretch (low complexity) spans 678-712; sequence EPASASAPGAEEVASPATEEGSPMDPGSDGSPGKS. S705, S708, and S712 each carry phosphoserine. Over residues 713-735 the composition is skewed to basic residues; sequence PSKKKKKFRTPSFLKKSKKKSDS. At S714 the chain carries Phosphoserine; by PKC. An interaction with calmodulin region spans residues 715-732; the sequence is KKKKKFRTPSFLKKSKKK. A Phosphoserine; by PKA and PKC modification is found at S724.

Belongs to the aldolase class II family. Adducin subfamily. As to quaternary structure, heterodimer of an alpha and a beta subunit or an alpha and a gamma subunit.

It is found in the cytoplasm. The protein resides in the cytoskeleton. The protein localises to the cell membrane. Functionally, membrane-cytoskeleton-associated protein that promotes the assembly of the spectrin-actin network. Binds to calmodulin. This chain is Alpha-adducin (Add1), found in Rattus norvegicus (Rat).